The primary structure comprises 1040 residues: Nucleotide-binding oligomerization domain-containing protein 2 (1040 aa).

CARD domains are found at residues 26 to 122 (CEMC…LHGC) and 126 to 218 (HSLH…EAAT). An ATG16L1-binding motif motif is present at residues 63–77 (WEVLSWEDYEGFHLL). Residues T239, Y252, T253, G302, S303, G304, K305, S306, and T307 each coordinate ADP. The required for CARD9 binding stretch occupies residues 241-274 (DGAETLCLEDIYTENVLEVWADVGMAGPPQKSPA). The NACHT domain occupies 293–618 (DTVLVVGEAG…FFAAFYLALS (326 aa)). 299 to 306 (GEAGSGKS) is a binding site for ATP. C395 carries S-palmitoyl cysteine lipidation. H603 lines the ADP pocket. LRR repeat units lie at residues 791–812 (RPVA…QLLP), 816–839 (VCKA…IECA), 844–865 (QLQK…SMAK), 872–884 (NFLA…NYIT), 900–920 (SLQF…QALA), 928–949 (SLRW…ALAL), 956–976 (MLEE…CSLA), 984–1005 (SLKI…ALLQ), and 1012–1032 (TILE…DKLG). C1033 is lipidated: S-palmitoyl cysteine.

Belongs to the NOD1-NOD2 family. As to quaternary structure, homooligomer: homooligomerizes following muramyl dipeptide (MDP)-binding, promoting RIPK2 recruitment. Interacts (via CARD domain) with RIPK2 (via CARD domain). Following RIPK2 recruitment, RIPK2 homooligomerizes via its CARD domain and forms long filaments named RIPosomes. Interacts (via CARD domain) with ubiquitin; inhibiting interaction with RIPK2. Component of a signaling complex consisting of ARHGEF2, NOD2 and RIPK2. Interacts with ANKRD17 (via N-terminus). Interacts with HSPA1A; the interaction enhances NOD2 stability. Interacts (via both CARD domains) with HSP90; the interaction enhances NOD2 stability. Interacts (via CARD domain) with SOCS3; the interaction promotes NOD2 degradation. Interacts (via CARD domain) with ERBIN; the interaction inhibits activation of NOD2. Interacts with MAPKBP1; the interaction is enhanced in the presence of muramyl dipeptide (MDP) and inhibits NOD2 homooligomerization and activation. Interacts with INAVA; the interaction takes place upon Pattern recognition receptor (PRR) stimulation. Interacts (via NACHT domain) with CARD9. Interacts (via CARD domain) with CASP1; this interaction leads to IL1B processing. Also interacts with CASP4. Interacts with NLRP1; this interaction is enhanced in the presence of muramyl dipeptide (MDP) and leads to increased IL1B release. Interacts with NLRP12; this interaction promotes degradation of NOD2 through the ubiquitin-proteasome pathway. Interacts with ANKHD1, C10orf67, CHMP5, DOCK7, ENTR1, KRT15, LDOC1, PPP1R12C, PPP2R3B, TRIM41 and VIM. Interacts with MAVS; interaction takes place following single-stranded RNA (ssRNA)-binding. Interacts with ATG16L1. Interacts with IRGM; promoting IRGM 'Lys-63'-linked polyubiquitination, which is required for interactions with the core autophagy factors. Palmitoylated by ZDHHC5; palmitoylation is required for proper recruitment to the bacterial entry site and hence for proper signaling upon cognate peptidoglycan detection. Palmitoylation promotes localization to the cell membrane. Palmitoylation protects from SQSTM1/p62-dependent autophagic degradation. Post-translationally, polyubiquitinated by TRIM27, leading to proteasome-mediated degradation. Polyubiquitinated and degraded following muramyl dipeptide (MDP) stimulation, conferring MDP tolerance and preventing septic shock. In terms of processing, degraded via selective autophagy following interaction with IRGM. IRGM promotes NOD2-RIPK2 RIPosome recruitment to autophagosome membranes, promoting their SQSTM1/p62-dependent autophagic degradation. O-glycosylated by OGT, O-GlcNAcylation increases protein stability. In terms of tissue distribution, expressed in monocytes, macrophages, dendritic cells, hepatocytes, preadipocytes, epithelial cells of oral cavity, lung and intestine, with higher expression in ileal Paneth cells and in intestinal stem cells. As to expression, expressed at higher level in leukocytes.

Its subcellular location is the cell membrane. The protein localises to the basolateral cell membrane. It localises to the cytoplasm. It is found in the mitochondrion. With respect to regulation, ADP-binding promotes an inactive closed conformation. Functionally, pattern recognition receptor (PRR) that detects bacterial peptidoglycan fragments and other danger signals and plays an important role in gastrointestinal immunity. Specifically activated by muramyl dipeptide (MDP), a fragment of bacterial peptidoglycan found in every bacterial peptidoglycan type. NOD2 specifically recognizes and binds 6-O-phospho-MDP, the phosphorylated form of MDP, which is generated by NAGK. 6-O-phospho-MDP-binding triggers oligomerization that facilitates the binding and subsequent activation of the proximal adapter receptor-interacting RIPK2. Following recruitment, RIPK2 undergoes 'Met-1'- (linear) and 'Lys-63'-linked polyubiquitination by E3 ubiquitin-protein ligases XIAP, BIRC2, BIRC3 and the LUBAC complex, becoming a scaffolding protein for downstream effectors, triggering activation of the NF-kappa-B and MAP kinases signaling. This in turn leads to the transcriptional activation of hundreds of genes involved in immune response. Its ability to detect bacterial MDP plays a central role in maintaining the equilibrium between intestinal microbiota and host immune responses to control inflammation. An imbalance in this relationship results in dysbiosis, whereby pathogenic bacteria prevail on commensals, causing damage in the intestinal epithelial barrier as well as allowing bacterial invasion and inflammation. Acts as a regulator of appetite by sensing MDP in a subset of brain neurons: microbiota-derived MDP reach the brain, where they bind and activate NOD2 in inhibitory hypothalamic neurons, decreasing neuronal activity, thereby regulating satiety and body temperature. NOD2-dependent MDP-sensing of bacterial cell walls in the intestinal epithelial compartment contributes to sustained postnatal growth upon undernutrition. Also plays a role in antiviral response by acting as a sensor of single-stranded RNA (ssRNA) from viruses: upon ssRNA-binding, interacts with MAVS, leading to activation of interferon regulatory factor-3/IRF3 and expression of type I interferon. Also acts as a regulator of autophagy in dendritic cells via its interaction with ATG16L1, possibly by recruiting ATG16L1 at the site of bacterial entry. NOD2 activation in the small intestine crypt also contributes to intestinal stem cells survival and function: acts by promoting mitophagy via its association with ATG16L1. In addition to its main role in innate immunity, also regulates the adaptive immune system by acting as regulator of helper T-cell and regulatory T-cells (Tregs). Besides recognizing pathogens, also involved in the endoplasmic reticulum stress response: acts by sensing and binding to the cytosolic metabolite sphingosine-1-phosphate generated in response to endoplasmic reticulum stress, initiating an inflammation process that leads to activation of the NF-kappa-B and MAP kinases signaling. May also be involved in NLRP1 activation following activation by MDP, leading to CASP1 activation and IL1B release in macrophages. In terms of biological role, acts as a pattern recognition receptor (PRR); able to activate NF-kappa-B. Its function is as follows. Can activate NF-kappa-B in a muramyl dipeptide (MDP)-independent manner. The polypeptide is Nucleotide-binding oligomerization domain-containing protein 2 (Homo sapiens (Human)).